Reading from the N-terminus, the 295-residue chain is Secreted frizzled-related protein 2 (295 aa).

The signal sequence occupies residues 1–24 (MPRGPASLLLLVLASHCCLGSARG). The 121-residue stretch at 35-155 (YKRSNCKPIP…PQDNDLCIPL (121 aa)) folds into the FZ domain. Cystine bridges form between C40–C103, C50–C96, C87–C125, C114–C152, C118–C142, C172–C245, C175–C247, and C190–C295. In terms of domain architecture, NTR spans 172–295 (CEACKTKNED…ISRSIRKLQC (124 aa)).

Belongs to the secreted frizzled-related protein (sFRP) family. As to expression, highly expressed in the eye. Weaker expression in heart and lung.

It localises to the secreted. Its function is as follows. Soluble frizzled-related proteins (sFRPS) function as modulators of Wnt signaling through direct interaction with Wnts. They have a role in regulating cell growth and differentiation in specific cell types. SFRP2 may be important for eye retinal development and for myogenesis. This is Secreted frizzled-related protein 2 from Mus musculus (Mouse).